A 674-amino-acid chain; its full sequence is Sodium/myo-inositol cotransporter 2 (674 aa).

Residues 1 to 27 are Extracellular-facing; it reads MESSPSSPQPTQSDPLAVFPQRTLEPA. The chain crosses the membrane as a helical span at residues 28–48; it reads DIAVLVLYFLFVLAVGLWSTV. The Cytoplasmic segment spans residues 49-56; it reads KTRRDTVK. A helical membrane pass occupies residues 57-77; the sequence is GYFLAGGDMVWWPVGASLFAS. Residues 78–102 lie on the Extracellular side of the membrane; that stretch reads NVGSGHFVGLAGSGAAAGLSVTAYE. The chain crosses the membrane as a helical span at residues 103 to 123; it reads FNGIFSVLMLAWIFLPIYIAG. Residues 124-140 are Cytoplasmic-facing; the sequence is QVTTMPEYLRKRFGGSR. A helical transmembrane segment spans residues 141–161; that stretch reads IPITLAVLYLFIYIFTKISVD. The Extracellular segment spans residues 162 to 180; sequence MYAGAIFIQQSLHLNLYLA. Residues 181–201 form a helical membrane-spanning segment; that stretch reads IVGLLAITALYTIAGGLAAVI. Topologically, residues 202 to 208 are cytoplasmic; it reads YTDALQT. A helical membrane pass occupies residues 209–229; that stretch reads LIMLIGALTLMGYSFAAVGGM. The Extracellular portion of the chain corresponds to 230-272; the sequence is EGLKEKYFLALASNRSGNSSCGLPREDAFHIFRDPLTSDLPWP. The chain crosses the membrane as a helical span at residues 273 to 293; it reads GILFGMSIPSLWYWCTDQVIV. Topologically, residues 294 to 308 are cytoplasmic; that stretch reads QRTLAAKNLSHAKGG. The chain crosses the membrane as a helical span at residues 309 to 329; sequence SLMAAYLKVLPLFIMVFPGMV. Topologically, residues 330 to 374 are extracellular; it reads SRVLFPDQVACADPEICQKVCSNPAGCSDIAYPKLVLELLPMGLR. Residues 375–397 form a helical membrane-spanning segment; the sequence is GLMMAVMVAALMSSLTSIFNSAS. Over 398-418 the chain is Cytoplasmic; the sequence is TIFTMDLWNHLRPRASERELM. The chain crosses the membrane as a helical span at residues 419 to 439; the sequence is IVGRVFVLLLVLVSILWIPVV. The Extracellular segment spans residues 440-446; that stretch reads QASQGGQ. The chain crosses the membrane as a helical span at residues 447–467; that stretch reads LFIYIQSISSYLQPPVAVVFI. Residues 468-479 are Cytoplasmic-facing; sequence MGCFWKRTNEKG. A helical transmembrane segment spans residues 480-500; that stretch reads AFSGLILGLLLGLVRLVLDFI. Topologically, residues 501 to 518 are extracellular; sequence YPQPRCDQPDERPAVVRD. A helical transmembrane segment spans residues 519–539; the sequence is VHYLYFSMILSSVTLVTVSTV. Residues 540-653 lie on the Cytoplasmic side of the membrane; that stretch reads SWCTAPPTQE…SLEEIPLVKT (114 aa). Residues 654–674 form a helical membrane-spanning segment; the sequence is LLDINLIVCISCAIFLWGYFA.

It belongs to the sodium:solute symporter (SSF) (TC 2.A.21) family.

The protein resides in the membrane. Its subcellular location is the apical cell membrane. The catalysed reaction is myo-inositol(out) + 2 Na(+)(out) = myo-inositol(in) + 2 Na(+)(in). The enzyme catalyses 1D-chiro-inositol(out) + 2 Na(+)(out) = 1D-chiro-inositol(in) + 2 Na(+)(in). It carries out the reaction D-glucose(out) + 2 Na(+)(out) = D-glucose(in) + 2 Na(+)(in). It catalyses the reaction D-xylose(out) + 2 Na(+)(out) = D-xylose(in) + 2 Na(+)(in). With respect to regulation, MI transport activity inhibited by D-chiro-inositol (DCI), phlorizin (Pz) and sodium (Na(+)). Insulin increases D-chiro-inositol uptake. Its function is as follows. Involved in the sodium-dependent cotransport of myo-inositol (MI) with a Na(+):MI stoichiometry of 2:1. Exclusively responsible for apical MI transport and absorption in intestine. Can also transport D-chiro-inositol (DCI) but not L-fucose. Exhibits stereospecific cotransport of both D-glucose and D-xylose. May induce apoptosis through the TNF-alpha, PDCD1 pathway. May play a role in the regulation of MI concentration in serum, involving reabsorption in at least the proximal tubule of the kidney. This Sus scrofa (Pig) protein is Sodium/myo-inositol cotransporter 2.